A 253-amino-acid polypeptide reads, in one-letter code: Sortase SrtE2 (253 aa).

Positions 1 to 11 are enriched in basic and acidic residues; that stretch reads MAATTDTEHQE. Residues 1–23 form a disordered region; the sequence is MAATTDTEHQEQAGTGGRGRRRP. A helical membrane pass occupies residues 30 to 50; sequence AVSVLGELLITAGLVMGLFVV. Residues 69–89 form a disordered region; that stretch reads EKVRDDWAQDRVGGSGQDGPG. The active site involves Cys220.

The protein belongs to the bacterial sortase family. Class E subfamily.

The protein resides in the cell membrane. It catalyses the reaction The enzyme catalyzes a cell wall sorting reaction in which a surface protein with a sorting signal containing a LPXTG motif is cleaved between the Thr and Gly residue. The resulting threonine carboxyl end of the protein is covalently attached to a pentaglycine cross-bridge of peptidoglycan.. Functionally, transpeptidase that anchors surface proteins to the cell wall. Recognizes Leu-Ala-x-Thr-Gly and Leu-Pro-x-Thr-Gly, with a preference for the former. Unlike the S.aureus sortase it cleaves not only the Thr-Gly motif but also the Ala-X bond; an Ala-Glu bond is a better substrate than the Thr-Gly motif in vitro. Among its possible substrates are the chaplins ChpA, ChpB and ChpC; this enzyme is more important for ChpC attachment than is SrtE1. A double knockout mutant of srtE1 and srtE2 shows a developmental defect in aerial hyphae formation more dramatic than that due to chaplin deletion. The polypeptide is Sortase SrtE2 (Streptomyces coelicolor (strain ATCC BAA-471 / A3(2) / M145)).